The primary structure comprises 161 residues: Phosphopantetheine adenylyltransferase (161 aa).

Residue serine 9 coordinates substrate. ATP contacts are provided by residues 9 to 10 (SF) and histidine 17. Substrate is bound by residues lysine 41, threonine 73, and arginine 87. ATP is bound by residues 88–90 (GLR), glutamate 98, and 123–129 (FAHISST).

The protein belongs to the bacterial CoaD family. Homohexamer. It depends on Mg(2+) as a cofactor.

Its subcellular location is the cytoplasm. It carries out the reaction (R)-4'-phosphopantetheine + ATP + H(+) = 3'-dephospho-CoA + diphosphate. It participates in cofactor biosynthesis; coenzyme A biosynthesis; CoA from (R)-pantothenate: step 4/5. Its function is as follows. Reversibly transfers an adenylyl group from ATP to 4'-phosphopantetheine, yielding dephospho-CoA (dPCoA) and pyrophosphate. The sequence is that of Phosphopantetheine adenylyltransferase from Chloroflexus aurantiacus (strain ATCC 29366 / DSM 635 / J-10-fl).